Here is a 374-residue protein sequence, read N- to C-terminus: MLNRPSSPDGGEAHAWPPDPEIPVFANAEHAHRRPLRWMFALVAVALSCLLATGIWRSRAAPPHAATQTVAPAGQALPPGRIFTVHPREPEPAPLPDMPAAPDPILPQPRPAPPVPPPPIRAPYDYDEPAPRRDSAALKSGPAMMVATAARLGQTERAGMADDGVSADAATLIGRNVSRATRSGGRDYRLLPGTFIDCILQTRIVTNVPGLTTCIVSRDVYSASGKRVLVPRGTTVVGEYRADLAQGSQRIYVAWSRLFMPSGLTIELASPAVDGTGAAGLPGVVDDKFAQRFGGALLLSVLGDATSYMLARATDARHGVNVNLTAAGTMNSLAASALNNTINIPPTLYKNHGDQIGILVARPLDFSILRGTNE.

The chain crosses the membrane as a helical span at residues 38–56; it reads WMFALVAVALSCLLATGIW. The interval 86-117 is disordered; that stretch reads HPREPEPAPLPDMPAAPDPILPQPRPAPPVPP. Residues 92 to 117 show a composition bias toward pro residues; sequence PAPLPDMPAAPDPILPQPRPAPPVPP.

It belongs to the TrbI/VirB10 family.

Its subcellular location is the cell membrane. Functionally, component of the type IV secretion system ptl required for secretion of assembled pertussis toxin (PTX) through the outer membrane. The protein is Type IV secretion system protein PtlG (ptlG) of Bordetella pertussis (strain Tohama I / ATCC BAA-589 / NCTC 13251).